The primary structure comprises 284 residues: Tropomyosin (284 aa).

Residues 1 to 273 (MDAIKKKMLA…KEKYKAISDE (273 aa)) are a coiled coil.

It belongs to the tropomyosin family. As to quaternary structure, homodimer.

Its function is as follows. Tropomyosin, in association with the troponin complex, plays a central role in the calcium dependent regulation of muscle contraction. This is Tropomyosin from Haliotis diversicolor (Abalone).